Consider the following 447-residue polypeptide: N-succinylarginine dihydrolase (447 aa).

Substrate contacts are provided by residues 19–28, asparagine 110, and 137–138; these read AGLSFGNEAS and HR. Glutamate 174 is a catalytic residue. Arginine 212 contacts substrate. Histidine 248 is a catalytic residue. Positions 250 and 359 each coordinate substrate. The Nucleophile role is filled by cysteine 365.

The protein belongs to the succinylarginine dihydrolase family. Homodimer.

The catalysed reaction is N(2)-succinyl-L-arginine + 2 H2O + 2 H(+) = N(2)-succinyl-L-ornithine + 2 NH4(+) + CO2. It participates in amino-acid degradation; L-arginine degradation via AST pathway; L-glutamate and succinate from L-arginine: step 2/5. Functionally, catalyzes the hydrolysis of N(2)-succinylarginine into N(2)-succinylornithine, ammonia and CO(2). This is N-succinylarginine dihydrolase from Salmonella paratyphi B (strain ATCC BAA-1250 / SPB7).